The following is a 64-amino-acid chain: Large ribosomal subunit protein bL28 (64 aa).

The disordered stretch occupies residues 1 to 23 (MARKDQISHRGPLSGNNRSHALN).

The protein belongs to the bacterial ribosomal protein bL28 family.

The sequence is that of Large ribosomal subunit protein bL28 from Mesomycoplasma hyopneumoniae (strain J / ATCC 25934 / NCTC 10110) (Mycoplasma hyopneumoniae).